The sequence spans 181 residues: MPLTDSLRDDILAAVPSLRAFAISLSGNADRADDLVQETLLRALANIDSFQPGSNLPAWLFTILRNLFRSDYRKRRREVEDADGSYAKTLKSQPGQTAHLEFEEFRAALDKLPQDQREALILVGASGFSYEDAAAICGCAVGTIKSRVNRARSKLSALLYVDGAEDFGPDDTVRAVIGGNG.

Residues valine 15–arginine 77 are sigma-70 factor domain-2. A sigma-70 factor domain-4 region spans residues glutamate 103 to leucine 155.

The protein belongs to the sigma-70 factor family. ECF subfamily.

Functionally, sigma factors are initiation factors that promote the attachment of RNA polymerase to specific initiation sites and are then released. Regulates expression of hpnP under a variety of stresses, including high temperature, pH stress, and presence of nonionic osmolytes. In Rhodopseudomonas palustris (strain TIE-1), this protein is ECF RNA polymerase sigma factor EcfG.